The primary structure comprises 244 residues: NAD-dependent protein deacylase SIR2rp3 (244 aa).

The Deacetylase sirtuin-type domain maps to 1 to 239; sequence MRRPNGMIAI…PAWADEVLHG (239 aa). 13–32 is a binding site for NAD(+); it reads GAGISAESGISTFRDQNGLW. 2 residues coordinate substrate: Y57 and R60. Residue 95-98 participates in NAD(+) binding; sequence QNID. The active-site Proton acceptor is the H113. Zn(2+) is bound by residues C121 and C141. NAD(+) contacts are provided by residues 181-183 and A225; that span reads GTS.

It belongs to the sirtuin family. Class III subfamily. Zn(2+) serves as cofactor.

The protein resides in the mitochondrion. It carries out the reaction N(6)-malonyl-L-lysyl-[protein] + NAD(+) + H2O = 2''-O-malonyl-ADP-D-ribose + nicotinamide + L-lysyl-[protein]. The enzyme catalyses N(6)-succinyl-L-lysyl-[protein] + NAD(+) + H2O = 2''-O-succinyl-ADP-D-ribose + nicotinamide + L-lysyl-[protein]. It catalyses the reaction N(6)-glutaryl-L-lysyl-[protein] + NAD(+) + H2O = 2''-O-glutaryl-ADP-D-ribose + nicotinamide + L-lysyl-[protein]. Its function is as follows. NAD-dependent lysine demalonylase, desuccinylase and deglutarylase that specifically removes malonyl, succinyl and glutaryl groups on target proteins. Has weak NAD-dependent protein deacetylase activity; however this activity may not be physiologically relevant in vivo. This Trypanosoma brucei brucei (strain 927/4 GUTat10.1) protein is NAD-dependent protein deacylase SIR2rp3 (SIR2rp3).